Here is a 110-residue protein sequence, read N- to C-terminus: uncharacterized protein (110 aa).

3 helical membrane passes run 5–25 (ILAI…PIHL), 62–82 (FPII…AIVS), and 90–110 (GISI…LISI).

To A.fulgidus AF1754.

The protein localises to the cell membrane. This is an uncharacterized protein from Methanocaldococcus jannaschii (strain ATCC 43067 / DSM 2661 / JAL-1 / JCM 10045 / NBRC 100440) (Methanococcus jannaschii).